Here is a 220-residue protein sequence, read N- to C-terminus: UPF0319 protein YccT (220 aa).

Residues 1 to 20 form the signal peptide; that stretch reads MKTGIVTTLIALCLPVSVFA.

The protein belongs to the UPF0319 family.

This Escherichia coli (strain 55989 / EAEC) protein is UPF0319 protein YccT.